Here is a 570-residue protein sequence, read N- to C-terminus: Developmental and secondary metabolism regulator veA (570 aa).

Disordered regions lie at residues 1 to 24, 39 to 60, 266 to 491, and 504 to 541; these read MATRPPLMPPANETESSVSRISRE, ERARACGAGAKSSADRRPVDPP, DMYA…LGSG, and KRSHEETFGSDERPLHNGMRPDMDQYPSMGRKQPDYGR. Residues 25 to 231 form the Velvet domain; it reads GKKITYKLSV…AEQGCRVRIR (207 aa). The Nuclear localization signal motif lies at 39–44; sequence ERARAC. Over residues 278–287 the composition is skewed to polar residues; it reads STSISTTADT. The span at 315 to 335 shows a compositional bias: low complexity; it reads SMPAASAAPAPAPVHSPATSA. Polar residues-rich tracts occupy residues 336–354, 363–395, and 427–445; these read QTSSYQSHLSFGATQSQYP, QSATPTNTYSPHPSYSHSRNPSNGTEYDATSSG, and NMQTSTDSRSSDANAYPTL. The interval 454–493 is PEST; that stretch reads PTPANHVTSLPPLKVLSGEYSHPSQPNAQSPHHDLGSGKR. Over residues 505–526 the composition is skewed to basic and acidic residues; sequence RSHEETFGSDERPLHNGMRPDM.

This sequence belongs to the velvet family. VeA subfamily. As to quaternary structure, component of the heterotrimeric velvet complex composed of laeA, veA and velB; VeA acting as a bridging protein between laeA and velB.

Its subcellular location is the nucleus. It is found in the cytoplasm. In terms of biological role, component of the velvet transcription factor complex that controls sexual/asexual developmental ratio in response to light, promoting sexual development in the darkness while stimulating asexual sporulation under illumination. The velvet complex hat acts as a global regulator for secondary metabolite gene expression. Controls the expression of hundreds of genes, including those comprising more than a dozen known secondary metabolite gene clusters. Controls the expression of the gliotoxin gene cluster. Controls the expression of the fumagillin, fumitremorgin G, fumigaclavine C and glionitrin gene clusters. The regulation of the fumagillin gene cluster and fumagillin production is performed through direct control of the expression of fumR. Negatively regulates conidiation. Required for normal protease activity. The polypeptide is Developmental and secondary metabolism regulator veA (Aspergillus fumigatus (strain ATCC MYA-4609 / CBS 101355 / FGSC A1100 / Af293) (Neosartorya fumigata)).